Reading from the N-terminus, the 226-residue chain is Probable transcriptional regulator RABBIT EARS (226 aa).

The C2H2-type zinc-finger motif lies at 55–77 (YSCSFCGREFKSAQALGGHMNVH). The interval 80–102 (DRARLKQQSLSPSSTDQATPPEC) is disordered. The span at 85 to 97 (KQQSLSPSSTDQA) shows a compositional bias: polar residues. Residues 212-216 (LDLEL) carry the EAR-like (transcriptional repression) motif.

In terms of tissue distribution, strongly expressed in inflorescences and flowers, and weakly in siliques, seedlings and roots. In flowers, it is expressed in petal primordia and their precursor cells. Also expressed in the lateral root caps and the basal cells of lateral roots.

The protein resides in the nucleus. In terms of biological role, probable transcriptional regulator essential for petal development. Required for the early development of the organ primordia of the second whorl. Acts downstream of AP1 and PTL. The sequence is that of Probable transcriptional regulator RABBIT EARS (RBE) from Arabidopsis thaliana (Mouse-ear cress).